Reading from the N-terminus, the 141-residue chain is Succinate dehydrogenase [ubiquinone] cytochrome b small subunit 2 (141 aa).

Residues 1–24 (MSLIRCTTSKALKFRQLLKMAART) constitute a mitochondrion transit peptide. Topologically, residues 25-44 (SVTTPVSREPFSIEDHSLHF) are mitochondrial matrix. The helical transmembrane segment at 45 to 63 (KIERYWAAGMIPLIPTAYF) threads the bilayer. The Mitochondrial intermembrane segment spans residues 64–68 (IHTPA). A helical membrane pass occupies residues 69–89 (MDAVLTVAIVLHVHWGIAGVV). H80 is a heme b binding site. Residues 90 to 104 (SDYARPFVIGDTLAR) lie on the Mitochondrial matrix side of the membrane. An a ubiquinone-binding site is contributed by Y92. The chain crosses the membrane as a helical span at residues 105 to 126 (VARASVYIITVILLASLLHFNN). At 127 to 141 (SDVGLTKAFEMVWSL) the chain is on the mitochondrial intermembrane side.

This sequence belongs to the CybS family. Component of the mitochondrial electron transport chain complex II composed of four subunits: a flavoprotein (Fp), an iron-sulfur protein (Ip), and a large cytochrome b (CybL) subunit and a small cytochrome b (CybS) subunit. There are 2 developmental stage-specific forms of complex II which have the Ip and CybL subunits in common. Complex II from the free-living larvae (aerobic environment) acts as a succinate dehydrogenase and is composed of the common subunit Ip and CybL and the stage specific subunits FpL and CybSL. Complex II from parasitic larvae and adults (anaerobic environment) acts as a fumarate reductase and is composed of the common subunit Ip and CybL and the stage specific subunits FpA and CybSA. Heme b serves as cofactor.

Its subcellular location is the mitochondrion inner membrane. The protein operates within carbohydrate metabolism; tricarboxylic acid cycle; fumarate from succinate (eukaryal route): step 1/1. In terms of biological role, membrane-bound small subunit (CybS) of the mitochondrial electron transport chain complex II, which together with the membrane-bound large subunit (CybL), anchor the catalytic subunits to the inner mitochondria membrane. During the free-living egg-larvae stages, which occur in an aerobic environment, complex II acts as a succinate dehydrogenase by transferring electrons from succinate to ubiquinone. In Ascaris suum (Pig roundworm), this protein is Succinate dehydrogenase [ubiquinone] cytochrome b small subunit 2.